The sequence spans 243 residues: Pyridoxine 5'-phosphate synthase (243 aa).

Residue N9 coordinates 3-amino-2-oxopropyl phosphate. D11–H12 serves as a coordination point for 1-deoxy-D-xylulose 5-phosphate. R20 lines the 3-amino-2-oxopropyl phosphate pocket. The active-site Proton acceptor is the H45. 2 residues coordinate 1-deoxy-D-xylulose 5-phosphate: R47 and H52. E72 serves as the catalytic Proton acceptor. T102 serves as a coordination point for 1-deoxy-D-xylulose 5-phosphate. The Proton donor role is filled by H193. 3-amino-2-oxopropyl phosphate-binding positions include G194 and G215–H216.

It belongs to the PNP synthase family. As to quaternary structure, homooctamer; tetramer of dimers.

The protein localises to the cytoplasm. It carries out the reaction 3-amino-2-oxopropyl phosphate + 1-deoxy-D-xylulose 5-phosphate = pyridoxine 5'-phosphate + phosphate + 2 H2O + H(+). The protein operates within cofactor biosynthesis; pyridoxine 5'-phosphate biosynthesis; pyridoxine 5'-phosphate from D-erythrose 4-phosphate: step 5/5. Its function is as follows. Catalyzes the complicated ring closure reaction between the two acyclic compounds 1-deoxy-D-xylulose-5-phosphate (DXP) and 3-amino-2-oxopropyl phosphate (1-amino-acetone-3-phosphate or AAP) to form pyridoxine 5'-phosphate (PNP) and inorganic phosphate. This chain is Pyridoxine 5'-phosphate synthase, found in Photorhabdus laumondii subsp. laumondii (strain DSM 15139 / CIP 105565 / TT01) (Photorhabdus luminescens subsp. laumondii).